The chain runs to 161 residues: Allophycocyanin beta chain (161 aa).

N71 bears the N4-methylasparagine mark. Residue C81 coordinates (2R,3E)-phycocyanobilin.

The protein belongs to the phycobiliprotein family. In terms of assembly, heterodimer of an alpha and a beta chain. In terms of processing, contains one covalently linked phycocyanobilin chromophore.

It localises to the plastid. The protein resides in the chloroplast thylakoid membrane. Its function is as follows. Light-harvesting photosynthetic bile pigment-protein from the phycobiliprotein complex. Allophycocyanin has a maximum absorption at approximately 650 nanometers. This Pyropia haitanensis (Red seaweed) protein is Allophycocyanin beta chain (apcB).